The chain runs to 807 residues: SWI/SNF complex subunit SWI3C (807 aa).

Positions methionine 1–valine 74 are disordered. Positions glutamate 28–aspartate 54 are enriched in acidic residues. An SWIRM domain is found at histidine 176–glycine 274. The ZZ-type; degenerate zinc finger occupies leucine 340–phenylalanine 394. Zn(2+) contacts are provided by cysteine 345, cysteine 348, cysteine 368, and cysteine 371. Residues glutamine 398–glycine 449 form the SANT domain. Composition is skewed to polar residues over residues glycine 458–asparagine 467 and glutamate 552–glutamate 569. Disordered stretches follow at residues glycine 458–glycine 487 and leucine 549–glutamine 571. Residues alanine 598–leucine 656 adopt a coiled-coil conformation. Low complexity-rich tracts occupy residues glutamine 692–glutamine 703 and glutamine 726–glutamine 739. Disordered regions lie at residues glutamine 692–asparagine 713, histidine 721–alanine 740, and serine 781–asparagine 807. Positions serine 798–asparagine 807 are enriched in gly residues.

In terms of assembly, heterodimer. Interacts with SWI3A, SWI3B and BRM, but not with BSH. Interacts with MORC6 and SUVH9. Expressed in roots, stems, leaves, flowers and siliques.

The protein resides in the nucleus. Functionally, component of a multiprotein complex equivalent of the SWI/SNF complex, an ATP-dependent chromatin-remodeling complex, which is required for the positive and negative regulation of gene expression of a large number of genes. It changes chromatin structure by altering DNA-histone contacts within a nucleosome, leading eventually to a change in nucleosome position, thus facilitating or repressing binding of gene-specific transcription factors. The sequence is that of SWI/SNF complex subunit SWI3C (SWI3C) from Arabidopsis thaliana (Mouse-ear cress).